The primary structure comprises 344 residues: Protein RecA (344 aa).

Gly65–Thr72 provides a ligand contact to ATP. Basic and acidic residues predominate over residues Glu323–Ala337. The segment at Glu323–Glu344 is disordered.

It belongs to the RecA family.

The protein localises to the cytoplasm. Can catalyze the hydrolysis of ATP in the presence of single-stranded DNA, the ATP-dependent uptake of single-stranded DNA by duplex DNA, and the ATP-dependent hybridization of homologous single-stranded DNAs. It interacts with LexA causing its activation and leading to its autocatalytic cleavage. The protein is Protein RecA of Xanthomonas euvesicatoria pv. vesicatoria (strain 85-10) (Xanthomonas campestris pv. vesicatoria).